A 328-amino-acid chain; its full sequence is DNA-directed RNA polymerase subunit alpha (328 aa).

Residues 1-234 (MQGSVTEFLK…EQLDAFVDLR (234 aa)) are alpha N-terminal domain (alpha-NTD). The interval 248–328 (FXPILLRPVD…NWPPASIAED (81 aa)) is alpha C-terminal domain (alpha-CTD).

It belongs to the RNA polymerase alpha chain family. As to quaternary structure, homodimer. The RNAP catalytic core consists of 2 alpha, 1 beta, 1 beta' and 1 omega subunit. When a sigma factor is associated with the core the holoenzyme is formed, which can initiate transcription.

It catalyses the reaction RNA(n) + a ribonucleoside 5'-triphosphate = RNA(n+1) + diphosphate. Functionally, DNA-dependent RNA polymerase catalyzes the transcription of DNA into RNA using the four ribonucleoside triphosphates as substrates. The chain is DNA-directed RNA polymerase subunit alpha from Haemophilus influenzae (strain ATCC 51907 / DSM 11121 / KW20 / Rd).